We begin with the raw amino-acid sequence, 152 residues long: Histone deacetylase complex subunit SAP18 (152 aa).

The segment at 1 to 38 is disordered; the sequence is MAEAARRQGGGRPLPPPPRGVNQQPPRPKPEPVDREKT. Basic and acidic residues predominate over residues 28 to 38; that stretch reads PKPEPVDREKT.

Belongs to the SAP18 family. Interacts with SIN3, ERF3, ERF4 and HDA19. As to expression, ubiquitous, with low level in flowers.

Functionally, links the histone deacetylase complex to transcriptional repressors bound to chromatin. Involved in the tethering of the SIN3 complex to core histone proteins. This is Histone deacetylase complex subunit SAP18 from Arabidopsis thaliana (Mouse-ear cress).